The sequence spans 265 residues: (-)-isopiperitenol/(-)-carveol dehydrogenase, mitochondrial (265 aa).

Residues 1–30 constitute a mitochondrion transit peptide; that stretch reads MASVKKLAGKVAIVTGGASGIGEVTARLFA. NAD(+) is bound at residue 13 to 38; that stretch reads IVTGGASGIGEVTARLFAERGARAVV. Ser147 serves as a coordination point for substrate. The Proton acceptor role is filled by Tyr160.

This sequence belongs to the short-chain dehydrogenases/reductases (SDR) family. In terms of assembly, homodimer and homotetramer. As to expression, peltate glandular trichomes.

The protein localises to the mitochondrion. The catalysed reaction is (1S,6R)-isopiperitenol + NAD(+) = (6R)-isopiperitenone + NADH + H(+). It carries out the reaction (1S,5R)-carveol + NADP(+) = (R)-carvone + NADPH + H(+). Its function is as follows. Involved in the biosynthesis of menthol and related monoterpenes in leaves. Can use (-)-trans-carveol and, with a lower relative velocity, (-)-trans-isopiperitenol, (+)-neomenthol, (+)-neoisomenthol and (-)-cis-isopiperitenol as substrates, but not (-)-cis-carvenol, (-)-menthol, (+)-isomenthol, 7-hydroxy-limonene, (-)-isopiperitenone or (-)-carvone. The sequence is that of (-)-isopiperitenol/(-)-carveol dehydrogenase, mitochondrial from Mentha piperita (Peppermint).